The chain runs to 68 residues: Purkinje cell protein 4-like protein 1 (68 aa).

Polar residues predominate over residues 1 to 16 (MSELNTKTPPAANQAS). A disordered region spans residues 1–42 (MSELNTKTPPAANQASDPEEKGKPGSIKKAEEEEEIDIDLTA). At T8 the chain carries Phosphothreonine. Residues 18–31 (PEEKGKPGSIKKAE) show a composition bias toward basic and acidic residues. The region spanning 45–68 (TEKAALAIQGKFRRFQKRKKDSSS) is the IQ domain.

Belongs to the PCP4 family. As to expression, expressed in laminar and nuclear structures of the CNS.

In Mus musculus (Mouse), this protein is Purkinje cell protein 4-like protein 1 (Pcp4l1).